We begin with the raw amino-acid sequence, 657 residues long: L-type lectin-domain containing receptor kinase I.8 (657 aa).

The first 23 residues, 1–23 (MAPGLDLIWMVISFLLLIHLSSQ), serve as a signal peptide directing secretion. The Extracellular segment spans residues 24–282 (QETGFSFNGF…QVPHPKMKTS (259 aa)). The interval 25–257 (ETGFSFNGFR…NHYILGWSFS (233 aa)) is legume-lectin like. N-linked (GlcNAc...) asparagine glycans are attached at residues Asn74, Asn124, Asn181, Asn204, and Asn225. Residues 283–303 (LLLILLLIVLGIILLVLLVGA) form a helical membrane-spanning segment. Over 304-657 (YLYRRNKYAE…THSIQYGIGR (354 aa)) the chain is Cytoplasmic. Residues 339–611 (FHKDGFLGKG…VQYLDRQVSL (273 aa)) enclose the Protein kinase domain. Residues 345–353 (LGKGGFGEV) and Lys366 each bind ATP. Residue Asp462 is the Proton acceptor of the active site.

This sequence in the C-terminal section; belongs to the protein kinase superfamily. Ser/Thr protein kinase family. It in the N-terminal section; belongs to the leguminous lectin family.

It localises to the cell membrane. The catalysed reaction is L-seryl-[protein] + ATP = O-phospho-L-seryl-[protein] + ADP + H(+). The enzyme catalyses L-threonyl-[protein] + ATP = O-phospho-L-threonyl-[protein] + ADP + H(+). In terms of biological role, involved in resistance response to the pathogenic fungus Alternaria brassicicola. The polypeptide is L-type lectin-domain containing receptor kinase I.8 (Arabidopsis thaliana (Mouse-ear cress)).